Consider the following 358-residue polypeptide: UDP-N-acetylglucosamine--N-acetylmuramyl-(pentapeptide) pyrophosphoryl-undecaprenol N-acetylglucosamine transferase (358 aa).

UDP-N-acetyl-alpha-D-glucosamine-binding positions include 12 to 14 (TAG), arginine 165, serine 195, and glutamine 290.

The protein belongs to the glycosyltransferase 28 family. MurG subfamily.

Its subcellular location is the cell membrane. The enzyme catalyses di-trans,octa-cis-undecaprenyl diphospho-N-acetyl-alpha-D-muramoyl-L-alanyl-D-glutamyl-meso-2,6-diaminopimeloyl-D-alanyl-D-alanine + UDP-N-acetyl-alpha-D-glucosamine = di-trans,octa-cis-undecaprenyl diphospho-[N-acetyl-alpha-D-glucosaminyl-(1-&gt;4)]-N-acetyl-alpha-D-muramoyl-L-alanyl-D-glutamyl-meso-2,6-diaminopimeloyl-D-alanyl-D-alanine + UDP + H(+). It functions in the pathway cell wall biogenesis; peptidoglycan biosynthesis. In terms of biological role, cell wall formation. Catalyzes the transfer of a GlcNAc subunit on undecaprenyl-pyrophosphoryl-MurNAc-pentapeptide (lipid intermediate I) to form undecaprenyl-pyrophosphoryl-MurNAc-(pentapeptide)GlcNAc (lipid intermediate II). This is UDP-N-acetylglucosamine--N-acetylmuramyl-(pentapeptide) pyrophosphoryl-undecaprenol N-acetylglucosamine transferase from Clostridium tetani (strain Massachusetts / E88).